The chain runs to 341 residues: DNA-directed RNA polymerase subunit alpha (341 aa).

Residues 1–233 (MVREEVAGST…DLFLPFLHAE (233 aa)) form an alpha N-terminal domain (alpha-NTD) region. Residues 269–341 (IPLNCIFIDQ…IDLLKNKLSF (73 aa)) are alpha C-terminal domain (alpha-CTD).

The protein belongs to the RNA polymerase alpha chain family. In plastids the minimal PEP RNA polymerase catalytic core is composed of four subunits: alpha, beta, beta', and beta''. When a (nuclear-encoded) sigma factor is associated with the core the holoenzyme is formed, which can initiate transcription.

It localises to the plastid. It is found in the chloroplast. It catalyses the reaction RNA(n) + a ribonucleoside 5'-triphosphate = RNA(n+1) + diphosphate. In terms of biological role, DNA-dependent RNA polymerase catalyzes the transcription of DNA into RNA using the four ribonucleoside triphosphates as substrates. This chain is DNA-directed RNA polymerase subunit alpha, found in Lolium perenne (Perennial ryegrass).